Consider the following 411-residue polypeptide: Glycogen synthase kinase-3 homolog MsK-2 (411 aa).

The Protein kinase domain occupies 74–358 (YMAERAVGQG…ALEALVHPFF (285 aa)). ATP is bound by residues 80–88 (VGQGSFGVV) and lysine 103. Aspartate 199 serves as the catalytic Proton acceptor. Tyrosine 234 carries the phosphotyrosine modification.

This sequence belongs to the protein kinase superfamily. CMGC Ser/Thr protein kinase family. GSK-3 subfamily. In terms of tissue distribution, absent in leaves and petioles while a moderate expression is seen in the stems, roots, and nodes.

It catalyses the reaction L-seryl-[protein] + ATP = O-phospho-L-seryl-[protein] + ADP + H(+). The catalysed reaction is L-threonyl-[protein] + ATP = O-phospho-L-threonyl-[protein] + ADP + H(+). This Medicago sativa (Alfalfa) protein is Glycogen synthase kinase-3 homolog MsK-2 (MSK-2).